The sequence spans 227 residues: Isopentenyl-diphosphate Delta-isomerase 1 (227 aa).

Lys-36 provides a ligand contact to substrate. Positions 40 and 51 each coordinate Mg(2+). A Nudix hydrolase domain is found at 49–199 (LLHRAFSVFL…EIKLTPWFKI (151 aa)). Substrate contacts are provided by Arg-70 and Lys-74. The active site involves Cys-86. Ser-87 serves as a coordination point for substrate. Residues Glu-146 and Glu-148 each contribute to the Mg(2+) site. Glu-148 is an active-site residue. Lys-176 is modified (N6-acetyllysine). Positions 225 to 227 (HRL) match the Microbody targeting signal motif.

This sequence belongs to the IPP isomerase type 1 family. Monomer. It depends on Mg(2+) as a cofactor.

The protein localises to the peroxisome. The catalysed reaction is isopentenyl diphosphate = dimethylallyl diphosphate. It functions in the pathway isoprenoid biosynthesis; dimethylallyl diphosphate biosynthesis; dimethylallyl diphosphate from isopentenyl diphosphate: step 1/1. Catalyzes the 1,3-allylic rearrangement of the homoallylic substrate isopentenyl (IPP) to its highly electrophilic allylic isomer, dimethylallyl diphosphate (DMAPP). This Mus musculus (Mouse) protein is Isopentenyl-diphosphate Delta-isomerase 1 (Idi1).